The primary structure comprises 141 residues: Large ribosomal subunit protein uL11 (141 aa).

It belongs to the universal ribosomal protein uL11 family. In terms of assembly, part of the ribosomal stalk of the 50S ribosomal subunit. Interacts with L10 and the large rRNA to form the base of the stalk. L10 forms an elongated spine to which L12 dimers bind in a sequential fashion forming a multimeric L10(L12)X complex. One or more lysine residues are methylated.

In terms of biological role, forms part of the ribosomal stalk which helps the ribosome interact with GTP-bound translation factors. The polypeptide is Large ribosomal subunit protein uL11 (Nostoc sp. (strain PCC 7120 / SAG 25.82 / UTEX 2576)).